Reading from the N-terminus, the 89-residue chain is Small ribosomal subunit protein uS14A (89 aa).

Belongs to the universal ribosomal protein uS14 family. Part of the 30S ribosomal subunit. Contacts proteins S3 and S10.

Functionally, binds 16S rRNA, required for the assembly of 30S particles and may also be responsible for determining the conformation of the 16S rRNA at the A site. This Listeria innocua serovar 6a (strain ATCC BAA-680 / CLIP 11262) protein is Small ribosomal subunit protein uS14A.